Here is a 449-residue protein sequence, read N- to C-terminus: Glutamate--tRNA ligase 2 (449 aa).

A 'HIGH' region motif is present at residues 17 to 27 (PSPTGFLHVGN). A 'KMSKS' region motif is present at residues 248–252 (ALSKR). Lys-251 provides a ligand contact to ATP.

The protein belongs to the class-I aminoacyl-tRNA synthetase family. Glutamate--tRNA ligase type 1 subfamily. In terms of assembly, monomer.

The protein resides in the cytoplasm. The enzyme catalyses tRNA(Glu) + L-glutamate + ATP = L-glutamyl-tRNA(Glu) + AMP + diphosphate. In terms of biological role, catalyzes the attachment of glutamate to tRNA(Glu) in a two-step reaction: glutamate is first activated by ATP to form Glu-AMP and then transferred to the acceptor end of tRNA(Glu). The chain is Glutamate--tRNA ligase 2 from Jannaschia sp. (strain CCS1).